We begin with the raw amino-acid sequence, 284 residues long: Ermin (284 aa).

Residues 1 to 23 form a disordered region; sequence MTDVPATFTQAECNGDKPPENGQ. At S73 the chain carries Phosphoserine. The interval 110-251 is disordered; sequence REGHQWEKIP…PTLGKKSDIS (142 aa). 2 stretches are compositionally biased toward basic and acidic residues: residues 126-140 and 171-183; these read EIRRQKERITEQPLK and LHSKHDEEQKVWD. The span at 184 to 200 shows a compositional bias: acidic residues; that stretch reads EEIDDDDDDNCNNDEDE. A compositionally biased stretch (basic and acidic residues) spans 201-220; the sequence is VRVIEFKKKHEEVSQFKEEG. Phosphoserine occurs at positions 214, 226, 230, and 233. Residues 225–235 show a composition bias toward low complexity; that stretch reads DSPLSSASSQA. Phosphothreonine is present on T237. Residues 265 to 284 form a binds actin region; it reads KIRKGNTKQRIDEFESMMHL.

Binds actin. As to expression, highly expressed in adult and fetal brain. Expressed at intermediate levels in the lung and liver.

It is found in the cytoplasm. The protein localises to the cytoskeleton. In terms of biological role, plays a role in cytoskeletal rearrangements during the late wrapping and/or compaction phases of myelinogenesis as well as in maintenance and stability of myelin sheath in the adult. May play an important role in late-stage oligodendroglia maturation, myelin/Ranvier node formation during CNS development, and in the maintenance and plasticity of related structures in the mature CNS. This is Ermin (ERMN) from Homo sapiens (Human).